A 276-amino-acid polypeptide reads, in one-letter code: 2-dehydro-3-deoxyphosphooctonate aldolase (276 aa).

This sequence belongs to the KdsA family.

Its subcellular location is the cytoplasm. It catalyses the reaction D-arabinose 5-phosphate + phosphoenolpyruvate + H2O = 3-deoxy-alpha-D-manno-2-octulosonate-8-phosphate + phosphate. Its pathway is carbohydrate biosynthesis; 3-deoxy-D-manno-octulosonate biosynthesis; 3-deoxy-D-manno-octulosonate from D-ribulose 5-phosphate: step 2/3. It functions in the pathway bacterial outer membrane biogenesis; lipopolysaccharide biosynthesis. The protein is 2-dehydro-3-deoxyphosphooctonate aldolase of Helicobacter pylori (strain P12).